Consider the following 293-residue polypeptide: Bifunctional protein FolD (293 aa).

NADP(+)-binding positions include 166 to 168 (GRS), Ser191, and Ile232.

Belongs to the tetrahydrofolate dehydrogenase/cyclohydrolase family. In terms of assembly, homodimer.

It catalyses the reaction (6R)-5,10-methylene-5,6,7,8-tetrahydrofolate + NADP(+) = (6R)-5,10-methenyltetrahydrofolate + NADPH. It carries out the reaction (6R)-5,10-methenyltetrahydrofolate + H2O = (6R)-10-formyltetrahydrofolate + H(+). Its pathway is one-carbon metabolism; tetrahydrofolate interconversion. Catalyzes the oxidation of 5,10-methylenetetrahydrofolate to 5,10-methenyltetrahydrofolate and then the hydrolysis of 5,10-methenyltetrahydrofolate to 10-formyltetrahydrofolate. In Synechococcus sp. (strain JA-2-3B'a(2-13)) (Cyanobacteria bacterium Yellowstone B-Prime), this protein is Bifunctional protein FolD.